Reading from the N-terminus, the 223-residue chain is ATP-dependent dethiobiotin synthetase BioD (223 aa).

11 to 16 (DIGKTY) lines the ATP pocket. Thr-15 is a binding site for Mg(2+). The active site involves Lys-36. Thr-40 lines the substrate pocket. ATP-binding positions include Asp-50, 110–113 (EGAG), and 174–175 (NN). Mg(2+) is bound by residues Asp-50 and Glu-110.

Belongs to the dethiobiotin synthetase family. Homodimer. Mg(2+) is required as a cofactor.

Its subcellular location is the cytoplasm. It catalyses the reaction (7R,8S)-7,8-diammoniononanoate + CO2 + ATP = (4R,5S)-dethiobiotin + ADP + phosphate + 3 H(+). It functions in the pathway cofactor biosynthesis; biotin biosynthesis; biotin from 7,8-diaminononanoate: step 1/2. Functionally, catalyzes a mechanistically unusual reaction, the ATP-dependent insertion of CO2 between the N7 and N8 nitrogen atoms of 7,8-diaminopelargonic acid (DAPA, also called 7,8-diammoniononanoate) to form a ureido ring. The chain is ATP-dependent dethiobiotin synthetase BioD from Staphylococcus epidermidis (strain ATCC 35984 / DSM 28319 / BCRC 17069 / CCUG 31568 / BM 3577 / RP62A).